A 366-amino-acid polypeptide reads, in one-letter code: MNKIALYCRPGFEKECAAEITDKAGQKEIYGFARVKDNSGYVLFECYQHEDADRLIREIPFRELIFARQMLVVGELLRDLSPEDRISPIIGMLQGVMERAGELRVEVPDTNESKELLKFCRKFTVPLRNAMRQEKILLIRENANRPVIHVFFIAPGCCYVGYSYSNNNSPFYMGIPRLKFPSDAPSRSTLKLEEAFHVFIPYDEWEERLASGLYAVDLGACPGGWTYQLVKRSMMVHAVDNGPMSESLMDTGQVKHHKVDGFKFVPSTKNIYWLVCDMVEKPAKVTQLMADWLVNGWCREAIFNLKLPMKKRYEEVAHNLQKMHLQLKENGINAQIQAKHLYHDREEITVHVRRIWSAYAANRDDY.

S-adenosyl-L-methionine-binding positions include Ser188, 221-224, Asp240, Asp260, and Asp277; that span reads CPGG. Lys306 (proton acceptor) is an active-site residue.

The protein belongs to the class I-like SAM-binding methyltransferase superfamily. RNA methyltransferase RlmE family. RlmM subfamily. As to quaternary structure, monomer.

The protein localises to the cytoplasm. It carries out the reaction cytidine(2498) in 23S rRNA + S-adenosyl-L-methionine = 2'-O-methylcytidine(2498) in 23S rRNA + S-adenosyl-L-homocysteine + H(+). Functionally, catalyzes the 2'-O-methylation at nucleotide C2498 in 23S rRNA. In Photorhabdus sp. (strain Az29), this protein is Ribosomal RNA large subunit methyltransferase M.